Here is a 248-residue protein sequence, read N- to C-terminus: ATP synthase subunit a (248 aa).

Transmembrane regions (helical) follow at residues 25–45 (IAFT…AVMM), 83–103 (FFPL…VGII), 113–133 (LIVT…YGLA), 142–162 (LFVP…IEVI), 192–212 (FIAM…LPLG), and 215–235 (IALT…FAIL).

Belongs to the ATPase A chain family. In terms of assembly, F-type ATPases have 2 components, CF(1) - the catalytic core - and CF(0) - the membrane proton channel. CF(1) has five subunits: alpha(3), beta(3), gamma(1), delta(1), epsilon(1). CF(0) has four main subunits: a, b, b' and c.

The protein localises to the cell inner membrane. Key component of the proton channel; it plays a direct role in the translocation of protons across the membrane. In Rhodopseudomonas palustris (strain HaA2), this protein is ATP synthase subunit a.